We begin with the raw amino-acid sequence, 162 residues long: MTVFEGNFENSKDLNIGIVVSRFNDLITNKLLSGCIDCLKRHGVNVETNENKVDIAWVPGAYELPLITQLMARTKKYDVIITLGAVIRGDTPHFDVVISEASKGIASVTRDTSIPIIFGVLTTDTMQQALERAGIKNNLGWGYALQALEMGSLVNAMKISKV.

Residues Phe-23, Ala-61–Glu-63, and Ala-85–Ile-87 each bind 5-amino-6-(D-ribitylamino)uracil. (2S)-2-hydroxy-3-oxobutyl phosphate is bound at residue Asp-90–Thr-91. His-93 acts as the Proton donor in catalysis. Position 118 (Phe-118) interacts with 5-amino-6-(D-ribitylamino)uracil. Arg-132 provides a ligand contact to (2S)-2-hydroxy-3-oxobutyl phosphate.

The protein belongs to the DMRL synthase family.

The catalysed reaction is (2S)-2-hydroxy-3-oxobutyl phosphate + 5-amino-6-(D-ribitylamino)uracil = 6,7-dimethyl-8-(1-D-ribityl)lumazine + phosphate + 2 H2O + H(+). It functions in the pathway cofactor biosynthesis; riboflavin biosynthesis; riboflavin from 2-hydroxy-3-oxobutyl phosphate and 5-amino-6-(D-ribitylamino)uracil: step 1/2. Functionally, catalyzes the formation of 6,7-dimethyl-8-ribityllumazine by condensation of 5-amino-6-(D-ribitylamino)uracil with 3,4-dihydroxy-2-butanone 4-phosphate. This is the penultimate step in the biosynthesis of riboflavin. This chain is 6,7-dimethyl-8-ribityllumazine synthase, found in Synechococcus sp. (strain CC9902).